Here is a 181-residue protein sequence, read N- to C-terminus: Oligoribonuclease (181 aa).

Positions 8–171 (LIWVDLEMTG…VDIQESIAEL (164 aa)) constitute an Exonuclease domain. Y129 is an active-site residue.

It belongs to the oligoribonuclease family.

Its subcellular location is the cytoplasm. Functionally, 3'-to-5' exoribonuclease specific for small oligoribonucleotides. The polypeptide is Oligoribonuclease (Shewanella loihica (strain ATCC BAA-1088 / PV-4)).